The chain runs to 470 residues: Uronate isomerase (470 aa).

Belongs to the metallo-dependent hydrolases superfamily. Uronate isomerase family.

It catalyses the reaction D-glucuronate = D-fructuronate. The enzyme catalyses aldehydo-D-galacturonate = keto-D-tagaturonate. Its pathway is carbohydrate metabolism; pentose and glucuronate interconversion. This chain is Uronate isomerase, found in Sphingopyxis alaskensis (strain DSM 13593 / LMG 18877 / RB2256) (Sphingomonas alaskensis).